The chain runs to 225 residues: Ribonuclease HII (225 aa).

Residues 28–220 (DIIAGTDEVG…VKEYVDISQE (193 aa)) form the RNase H type-2 domain. Positions 34, 35, and 129 each coordinate a divalent metal cation.

This sequence belongs to the RNase HII family. Requires Mn(2+) as cofactor. Mg(2+) is required as a cofactor.

It localises to the cytoplasm. It carries out the reaction Endonucleolytic cleavage to 5'-phosphomonoester.. Endonuclease that specifically degrades the RNA of RNA-DNA hybrids. In Desulfotalea psychrophila (strain LSv54 / DSM 12343), this protein is Ribonuclease HII.